The following is a 426-amino-acid chain: Monocarboxylate transporter 13 (426 aa).

Topologically, residues 1–10 (MAYRAEPPDG) are cytoplasmic. A run of 12 helical transmembrane segments spans residues 11-31 (GWGW…FGVL), 52-72 (VSWI…VGSA), 83-103 (VMTG…ATSL), 106-126 (LYLS…TPTL), 139-159 (LAMG…APLF), 172-192 (LLLV…LRPL), 221-241 (VALT…VAHL), 244-264 (LGWD…SDLV), 283-303 (LLML…VAEA), 306-326 (GLVA…PVAF), 338-358 (IYCG…LGAP), and 374-394 (FVVA…LPHF). Over 395–426 (FCFSAPTSKPQDLVTEALDTKVPLPEEGLGED) the chain is Cytoplasmic.

This sequence belongs to the major facilitator superfamily. Monocarboxylate porter (TC 2.A.1.13) family.

The protein localises to the golgi apparatus membrane. Its subcellular location is the cell membrane. Functionally, proton-linked monocarboxylate transporter. May catalyze the transport of monocarboxylates across the plasma membrane. This chain is Monocarboxylate transporter 13 (SLC16A13), found in Bos taurus (Bovine).